Consider the following 90-residue polypeptide: Antitoxin epsilon 2 (90 aa).

This sequence belongs to the epsilon antitoxin family. In terms of assembly, in the presence of the zeta toxin, forms an inactive PezA(2)PezT(2) heterotetramer.

Functionally, antitoxin component of a type II toxin-antitoxin (TA) system. Neutralizes the toxic effect of zeta toxin. Part of a postsegregational killing (PSK) system involved in the killing of plasmid-free cells. Continuous synthesis of the epsilon antitoxin is required to counteract the zeta toxin. This chain is Antitoxin epsilon 2, found in Enterococcus faecalis (Streptococcus faecalis).